The primary structure comprises 254 residues: UPF0246 protein CPE2152 (254 aa).

Belongs to the UPF0246 family.

The chain is UPF0246 protein CPE2152 from Clostridium perfringens (strain 13 / Type A).